The primary structure comprises 467 residues: 3-isopropylmalate dehydratase large subunit (467 aa).

[4Fe-4S] cluster contacts are provided by Cys-347, Cys-407, and Cys-410.

Belongs to the aconitase/IPM isomerase family. LeuC type 1 subfamily. As to quaternary structure, heterodimer of LeuC and LeuD. [4Fe-4S] cluster serves as cofactor.

The catalysed reaction is (2R,3S)-3-isopropylmalate = (2S)-2-isopropylmalate. It participates in amino-acid biosynthesis; L-leucine biosynthesis; L-leucine from 3-methyl-2-oxobutanoate: step 2/4. Catalyzes the isomerization between 2-isopropylmalate and 3-isopropylmalate, via the formation of 2-isopropylmaleate. This chain is 3-isopropylmalate dehydratase large subunit, found in Synechococcus sp. (strain JA-2-3B'a(2-13)) (Cyanobacteria bacterium Yellowstone B-Prime).